Here is a 206-residue protein sequence, read N- to C-terminus: Protein Nef (206 aa).

Residues 1 to 46 (MGNKWSKCSTVGRPAIRERMRRAPAAEGVGPASQDSDKYGALTSSS) form a disordered region. Glycine 2 carries the N-myristoyl glycine; by host lipid modification. Serine 6 carries the post-translational modification Phosphoserine; by host. The acidic; interacts with host PACS1 and PACS2; stabilizes the interaction of NEF/MHC-I with host AP1M1; necessary for MHC-I internalization stretch occupies residues 61-65 (QEEEE). The SH3-binding; interaction with Src family tyrosine kinases stretch occupies residues 69 to 78 (PVRPQVPLRP). A PxxP; stabilizes the interaction of NEF/MHC-I with host AP1M1; necessary for MHC-I internalization motif is present at residues 72–75 (PQVP). The interval 108 to 124 (DILDLWVYNTQGYFPDW) is mediates dimerization, Nef-PTE1 interaction. Positions 148–180 (VDPREVEEANTGENNSLLHPMSLHGMEDSHREV) are binding to ATP6V1H. The Dileucine internalization motif; necessary for CD4 internalization signature appears at 164–165 (LL). The short motif at 174–175 (ED) is the Diacidic; necessary for CD4 internalization element.

The protein belongs to the lentivirus primate group Nef protein family. As to quaternary structure, monomer; cytosolic form. Homodimer; membrane bound form. Interacts with Nef associated p21-activated kinase (PAK2); this interaction activates PAK2. Associates with the Nef-MHC-I-AP1 complex; this complex is required for MHC-I internalization. Interacts (via C-terminus) with host PI3-kinase. Interacts with host PACS1; this interaction seems to be weak. Interacts with host PACS2. Interacts with host LCK and MAPK3; these interactions inhibit the kinase activity of the latter. Interacts with host ATP6V1H; this interaction may play a role in CD4 endocytosis. Associates with the CD4-Nef-AP2 complex; this complex is required for CD4 internalization. Interacts with host AP2 subunit alpha and AP2 subunit sigma2. Interacts with TCR-zeta chain; this interaction up-regulates the Fas ligand (FasL) surface expression. Interacts with host HCK, LYN, and SRC; these interactions activate the Src family kinases. Interacts with MAP3K5; this interaction inhibits the Fas and TNFR-mediated death signals. Interacts with beta-COP and PTE1. Interacts with human RACK1; this increases Nef phosphorylation by PKC. Interacts with TP53; this interaction decreases the half-life of TP53, protecting the infected cell against p53-mediated apoptosis. The virion-associated Nef proteins are cleaved by the viral protease to release the soluble C-terminal core protein. Nef is probably cleaved concomitantly with viral structural proteins on maturation of virus particles. Post-translationally, myristoylated. In terms of processing, phosphorylated on serine residues, probably by host PKCdelta and theta.

The protein resides in the host cell membrane. It is found in the virion. The protein localises to the secreted. It localises to the host Golgi apparatus membrane. In terms of biological role, factor of infectivity and pathogenicity, required for optimal virus replication. Alters numerous pathways of T-lymphocyte function and down-regulates immunity surface molecules in order to evade host defense and increase viral infectivity. Alters the functionality of other immunity cells, like dendritic cells, monocytes/macrophages and NK cells. In infected CD4(+) T-lymphocytes, down-regulates the surface MHC-I, mature MHC-II, CD4, CD28, CCR5 and CXCR4 molecules. Mediates internalization and degradation of host CD4 through the interaction of with the cytoplasmic tail of CD4, the recruitment of AP-2 (clathrin adapter protein complex 2), internalization through clathrin coated pits, and subsequent transport to endosomes and lysosomes for degradation. Diverts host MHC-I molecules to the trans-Golgi network-associated endosomal compartments by an endocytic pathway to finally target them for degradation. MHC-I down-regulation may involve AP-1 (clathrin adapter protein complex 1) or possibly Src family kinase-ZAP70/Syk-PI3K cascade recruited by PACS2. In consequence infected cells are masked for immune recognition by cytotoxic T-lymphocytes. Decreasing the number of immune receptors also prevents reinfection by more HIV particles (superinfection). Down-regulates host SERINC3 and SERINC5 thereby excluding these proteins from the viral particles. Virion infectivity is drastically higher when SERINC3 or SERINC5 are excluded from the viral envelope, because these host antiviral proteins impair the membrane fusion event necessary for subsequent virion penetration. Its function is as follows. Bypasses host T-cell signaling by inducing a transcriptional program nearly identical to that of anti-CD3 cell activation. Interaction with TCR-zeta chain up-regulates the Fas ligand (FasL). Increasing surface FasL molecules and decreasing surface MHC-I molecules on infected CD4(+) cells send attacking cytotoxic CD8+ T-lymphocytes into apoptosis. Functionally, plays a role in optimizing the host cell environment for viral replication without causing cell death by apoptosis. Protects the infected cells from apoptosis in order to keep them alive until the next virus generation is ready to strike. Inhibits the Fas and TNFR-mediated death signals by blocking MAP3K5/ASK1. Decreases the half-life of TP53, protecting the infected cell against p53-mediated apoptosis. Inhibits the apoptotic signals regulated by the Bcl-2 family proteins through the formation of a Nef/PI3-kinase/PAK2 complex that leads to activation of PAK2 and induces phosphorylation of host BAD. In terms of biological role, extracellular Nef protein targets CD4(+) T-lymphocytes for apoptosis by interacting with CXCR4 surface receptors. This chain is Protein Nef, found in Human immunodeficiency virus type 1 group M subtype C (isolate 92BR025) (HIV-1).